The chain runs to 174 residues: Gamma-crystallin S (174 aa).

Beta/gamma crystallin 'Greek key' domains are found at residues 2–40 and 41–83; these read GRIIFYEDKNFQGRRYECDSDCSDFHAFLNRCNSIRVES and GAWV…KMIH. The tract at residues 84 to 89 is connecting peptide; the sequence is FVSGSE. 2 Beta/gamma crystallin 'Greek key' domains span residues 90-130 and 131-173; these read YKIQ…KVLD and GIWI…KRLM.

It belongs to the beta/gamma-crystallin family.

Its function is as follows. Crystallins are the dominant structural components of the vertebrate eye lens. The chain is Gamma-crystallin S (crygs) from Cyprinus carpio (Common carp).